The following is a 120-amino-acid chain: Large ribosomal subunit protein uL18 (120 aa).

The protein belongs to the universal ribosomal protein uL18 family. Part of the 50S ribosomal subunit; part of the 5S rRNA/L5/L18/L25 subcomplex. Contacts the 5S and 23S rRNAs.

Functionally, this is one of the proteins that bind and probably mediate the attachment of the 5S RNA into the large ribosomal subunit, where it forms part of the central protuberance. In Methylobacterium nodulans (strain LMG 21967 / CNCM I-2342 / ORS 2060), this protein is Large ribosomal subunit protein uL18.